Consider the following 902-residue polypeptide: Protein translocase subunit SecA (902 aa).

Residues Q87, 105 to 109, and D512 contribute to the ATP site; that span reads GEGKT. The segment at 847–902 is disordered; sequence DAERLARQQQLSHLDDQSAAAQEMASQTGDRKIGRNDPCPCGSGKKYKQCHGRLNA. Residues C885, C887, C896, and H897 each contribute to the Zn(2+) site. The span at 891 to 902 shows a compositional bias: basic residues; it reads KKYKQCHGRLNA.

Belongs to the SecA family. In terms of assembly, monomer and homodimer. Part of the essential Sec protein translocation apparatus which comprises SecA, SecYEG and auxiliary proteins SecDF-YajC and YidC. Zn(2+) is required as a cofactor.

Its subcellular location is the cell inner membrane. It is found in the cytoplasm. It carries out the reaction ATP + H2O + cellular proteinSide 1 = ADP + phosphate + cellular proteinSide 2.. Its function is as follows. Part of the Sec protein translocase complex. Interacts with the SecYEG preprotein conducting channel. Has a central role in coupling the hydrolysis of ATP to the transfer of proteins into and across the cell membrane, serving both as a receptor for the preprotein-SecB complex and as an ATP-driven molecular motor driving the stepwise translocation of polypeptide chains across the membrane. This is Protein translocase subunit SecA from Edwardsiella ictaluri (strain 93-146).